The primary structure comprises 976 residues: Villin-2 (976 aa).

Gelsolin-like repeat units lie at residues 27–77 (FEAV…DEAG), 148–188 (IRLK…QERA), 260–302 (GKME…DERK), 399–450 (GKVK…EDQD), 531–571 (NKAV…EQLE), and 633–674 (FQVE…KEKQ). The segment at 769 to 917 (NSSSNRPAYS…SEIQPSGATF (149 aa)) is disordered. Positions 782 to 794 (RLNESHDGPRQRA) are enriched in basic and acidic residues. 3 stretches are compositionally biased toward low complexity: residues 795-812 (EALA…SSTK), 823-841 (SQAS…VLVA), and 848-858 (DTSPTRRSTSS). The residue at position 890 (serine 890) is a Phosphoserine. Residues 908-917 (SEIQPSGATF) show a composition bias toward polar residues. The 66-residue stretch at 911–976 (QPSGATFTYE…DLLKKKFDLF (66 aa)) folds into the HP domain.

This sequence belongs to the villin/gelsolin family. Expressed in all tissues examined. Mainly detected in the root epidermis and vasculature. Expressed in the root cap.

It localises to the cytoplasm. It is found in the cytoskeleton. Functionally, ca(2+)-regulated actin-binding protein. Involved in actin filaments bundling. Caps the barbed end of actin filaments and is able to sever them in a calcium-dependent manner. Required for the construction of actin collars in pollen tubes. Acts redundantly with VLN5 (AC Q9LVC6) to generate thick actin filament bundles and to regulate polarized pollen tube growth. Acts redundantly with VLN3 (AC O81645) to regulate directional organ growth and in sclerenchyma development. This is Villin-2 from Arabidopsis thaliana (Mouse-ear cress).